Reading from the N-terminus, the 622-residue chain is UvrABC system protein C (622 aa).

The region spanning 13–92 (DKPGVYLMKN…IKENRPKYNV (80 aa)) is the GIY-YIG domain. Residues 205–240 (DELIKKIEEKMKRAAEKMDFEGAAHYRDQRQALLDI) enclose the UVR domain.

Belongs to the UvrC family. Interacts with UvrB in an incision complex.

The protein resides in the cytoplasm. The UvrABC repair system catalyzes the recognition and processing of DNA lesions. UvrC both incises the 5' and 3' sides of the lesion. The N-terminal half is responsible for the 3' incision and the C-terminal half is responsible for the 5' incision. The protein is UvrABC system protein C of Alkaliphilus metalliredigens (strain QYMF).